A 213-amino-acid chain; its full sequence is Large ribosomal subunit protein uL1 (213 aa).

The protein belongs to the universal ribosomal protein uL1 family. Part of the 50S ribosomal subunit.

Functionally, binds directly to 23S rRNA. Probably involved in E site tRNA release. In terms of biological role, protein L1 is also a translational repressor protein, it controls the translation of its operon by binding to its mRNA. The protein is Large ribosomal subunit protein uL1 of Methanosarcina mazei (strain ATCC BAA-159 / DSM 3647 / Goe1 / Go1 / JCM 11833 / OCM 88) (Methanosarcina frisia).